An 83-amino-acid chain; its full sequence is uncharacterized protein (83 aa).

The segment at 15-36 (RLKNGRGNKTMSESDYNTSDSG) is disordered. Residues 21–35 (GNKTMSESDYNTSDS) are compositionally biased toward polar residues.

This is an uncharacterized protein from Aedes vexans (Inland floodwater mosquito).